The sequence spans 173 residues: Telomerase RNA component interacting RNase (173 aa).

Residues 1–12 are compositionally biased toward basic and acidic residues; it reads MAARGRRAEPPG. A disordered region spans residues 1 to 119; sequence MAARGRRAEP…LSFVGKRRGG (119 aa). Low complexity-rich tracts occupy residues 14-23 and 43-52; these read EAPGPAGSGR and SGSSPVSSGV. Positions 64 to 79 are enriched in basic and acidic residues; sequence LFKRKMEEEQRQRQEE. Positions 80–90 are enriched in pro residues; the sequence is PPPGPQRPDPP. Residue Lys143 is modified to N6-acetyllysine.

Part of the telomerase RNA 3' end complex which contains about 488 proteins.

Its function is as follows. Exoribonuclease that is part of the telomerase RNA 3' end processing complex and which has the ability to cleave all four unpaired RNA nucleotides from the 5' end or 3' end with higher efficiency for purine bases. The protein is Telomerase RNA component interacting RNase of Mus musculus (Mouse).